The primary structure comprises 295 residues: Small ribosomal subunit biogenesis GTPase RsgA (295 aa).

A CP-type G domain is found at Lys65–Leu223. Residues Asn114–Asp117 and Gly165–Ser173 each bind GTP. Positions 246, 251, 253, and 259 each coordinate Zn(2+).

This sequence belongs to the TRAFAC class YlqF/YawG GTPase family. RsgA subfamily. Monomer. Associates with 30S ribosomal subunit, binds 16S rRNA. Zn(2+) is required as a cofactor.

It localises to the cytoplasm. Its function is as follows. One of several proteins that assist in the late maturation steps of the functional core of the 30S ribosomal subunit. Helps release RbfA from mature subunits. May play a role in the assembly of ribosomal proteins into the subunit. Circularly permuted GTPase that catalyzes slow GTP hydrolysis, GTPase activity is stimulated by the 30S ribosomal subunit. This is Small ribosomal subunit biogenesis GTPase RsgA from Caldanaerobacter subterraneus subsp. tengcongensis (strain DSM 15242 / JCM 11007 / NBRC 100824 / MB4) (Thermoanaerobacter tengcongensis).